A 424-amino-acid polypeptide reads, in one-letter code: 2,3-bisphosphoglycerate-independent phosphoglycerate mutase (424 aa).

Belongs to the BPG-independent phosphoglycerate mutase family. A-PGAM subfamily.

It catalyses the reaction (2R)-2-phosphoglycerate = (2R)-3-phosphoglycerate. It functions in the pathway carbohydrate degradation; glycolysis; pyruvate from D-glyceraldehyde 3-phosphate: step 3/5. Functionally, catalyzes the interconversion of 2-phosphoglycerate and 3-phosphoglycerate. This Aeropyrum pernix (strain ATCC 700893 / DSM 11879 / JCM 9820 / NBRC 100138 / K1) protein is 2,3-bisphosphoglycerate-independent phosphoglycerate mutase.